The following is a 475-amino-acid chain: Methionine aminopeptidase 2-1 (475 aa).

Residues M1 to T12 show a composition bias toward basic and acidic residues. Residues M1 to L97 form a disordered region. Residues N44–E57 are compositionally biased toward acidic residues. The span at K70–K83 shows a compositional bias: basic residues. H211 is a binding site for substrate. A divalent metal cation contacts are provided by D232, D243, and H312. H320 serves as a coordination point for substrate. The a divalent metal cation site is built by E345 and E456.

This sequence belongs to the peptidase M24A family. Methionine aminopeptidase eukaryotic type 2 subfamily. Co(2+) is required as a cofactor. Requires Zn(2+) as cofactor. It depends on Mn(2+) as a cofactor. The cofactor is Fe(2+).

It localises to the cytoplasm. The catalysed reaction is Release of N-terminal amino acids, preferentially methionine, from peptides and arylamides.. Its function is as follows. Cotranslationally removes the N-terminal methionine from nascent proteins. The N-terminal methionine is often cleaved when the second residue in the primary sequence is small and uncharged (Met-Ala-, Cys, Gly, Pro, Ser, Thr, or Val). This Aspergillus niger (strain ATCC MYA-4892 / CBS 513.88 / FGSC A1513) protein is Methionine aminopeptidase 2-1.